Here is a 216-residue protein sequence, read N- to C-terminus: Small ribosomal subunit protein uS3 (216 aa).

The 71-residue stretch at 38–108 folds into the KH type-2 domain; it reads LREFVKKKLH…DLAIDIQEVK (71 aa).

This sequence belongs to the universal ribosomal protein uS3 family. As to quaternary structure, part of the 30S ribosomal subunit. Forms a tight complex with proteins S10 and S14.

Its function is as follows. Binds the lower part of the 30S subunit head. Binds mRNA in the 70S ribosome, positioning it for translation. This is Small ribosomal subunit protein uS3 from Desulfosudis oleivorans (strain DSM 6200 / JCM 39069 / Hxd3) (Desulfococcus oleovorans).